Here is a 301-residue protein sequence, read N- to C-terminus: Bifunctional dTDP-4-dehydrorhamnose 3,5-epimerase/dTDP-4-dehydrorhamnose reductase (301 aa).

Residues 23 to 24 (WI), 69 to 71 (GVT), and Tyr-111 contribute to the NADPH site.

This sequence belongs to the dTDP-4-dehydrorhamnose reductase family. In terms of tissue distribution, expressed in roots, leaves, stems and flowers.

The enzyme catalyses dTDP-4-dehydro-6-deoxy-alpha-D-glucose = dTDP-4-dehydro-beta-L-rhamnose. It catalyses the reaction dTDP-beta-L-rhamnose + NADP(+) = dTDP-4-dehydro-beta-L-rhamnose + NADPH + H(+). It functions in the pathway carbohydrate biosynthesis; dTDP-L-rhamnose biosynthesis. Bifunctional enzyme involved in dTDP-beta-L-rhamnose biosynthesis. Catalyzes the epimerization of the C3' and C5'positions of dTDP-6-deoxy-4-keto-alpha-D-glucose to form dTDP-4-keto-beta-L-rhamnose and its reduction to yield dTDP-beta-L-rhamnose. Can form UDP-beta-L-rhamnose from UDP-6-deoxy-4-keto-alpha-D-glucose, but cannot convert GDP-4-dehydro-6-deoxy-D-mannose to GDP-fucose. This is Bifunctional dTDP-4-dehydrorhamnose 3,5-epimerase/dTDP-4-dehydrorhamnose reductase from Arabidopsis thaliana (Mouse-ear cress).